The chain runs to 229 residues: DNA mismatch repair protein MutH (229 aa).

Belongs to the MutH family.

It localises to the cytoplasm. Sequence-specific endonuclease that cleaves unmethylated GATC sequences. It is involved in DNA mismatch repair. The protein is DNA mismatch repair protein MutH of Shigella dysenteriae serotype 1 (strain Sd197).